Here is a 369-residue protein sequence, read N- to C-terminus: Phospho-N-acetylmuramoyl-pentapeptide-transferase (369 aa).

A run of 10 helical transmembrane segments spans residues 13–33, 49–69, 95–115, 119–139, 154–174, 183–203, 215–235, 237–257, 281–301, and 346–366; these read ISGIGLASSLAAGLGIAALTL, LPLLLCTIASAIAGYFVVPLL, MGGIFFIPVAVVGACVLSNFA, LAVSALTLSYGLIGWIDDWQI, LALQIGFAAAFCLWLMFNQPA, WVSFALPLGFLFWPLAGFVLV, IDGLAGGTVAIALLALGAIVA, TSPALMVFCAALSGSCLGFLA, AVALLTNSLVALFILSGIFFV, and VVSSFYVIAAILAAICLAIAS.

This sequence belongs to the glycosyltransferase 4 family. MraY subfamily. Mg(2+) serves as cofactor.

Its subcellular location is the cell inner membrane. It catalyses the reaction UDP-N-acetyl-alpha-D-muramoyl-L-alanyl-gamma-D-glutamyl-meso-2,6-diaminopimeloyl-D-alanyl-D-alanine + di-trans,octa-cis-undecaprenyl phosphate = di-trans,octa-cis-undecaprenyl diphospho-N-acetyl-alpha-D-muramoyl-L-alanyl-D-glutamyl-meso-2,6-diaminopimeloyl-D-alanyl-D-alanine + UMP. It participates in cell wall biogenesis; peptidoglycan biosynthesis. Catalyzes the initial step of the lipid cycle reactions in the biosynthesis of the cell wall peptidoglycan: transfers peptidoglycan precursor phospho-MurNAc-pentapeptide from UDP-MurNAc-pentapeptide onto the lipid carrier undecaprenyl phosphate, yielding undecaprenyl-pyrophosphoryl-MurNAc-pentapeptide, known as lipid I. This chain is Phospho-N-acetylmuramoyl-pentapeptide-transferase, found in Nostoc sp. (strain PCC 7120 / SAG 25.82 / UTEX 2576).